The following is a 146-amino-acid chain: VHWTAEEKALINAYWGKVDVGSVGGETLANLLVVYPWTQRFFEDFGNLSTPSAILNNPKXXXXXXXVITSFGDALKNLDNVXXXXXKLSEYHCNKLHVDPVNFRLLGDVLITLSAANFGKXXXXXXXXXXXXLVGVVAHALARRYH.

Residues 2–146 (HWTAEEKALI…VAHALARRYH (145 aa)) form the Globin domain. Residue H92 coordinates heme b.

This sequence belongs to the globin family. Heterotetramer of two alpha chains and two beta chains. As to expression, red blood cells.

Involved in oxygen transport from the lung to the various peripheral tissues. In Saara hardwickii (Indian spiny-tailed lizard), this protein is Hemoglobin subunit beta-1.